Reading from the N-terminus, the 592-residue chain is Coronatine-insensitive protein 1 (592 aa).

The F-box domain occupies 16–57 (TVDDVIEQVMTYITDPKDRDSASLVCRRWFKIDSETREHVTM). 18 LRR repeats span residues 58–82 (ALCYTATPDRLSRRFPNLRSLKLKG), 83–102 (KPRAAMFNLIPENWGGYVTP), 103–120 (WVTEISNNLRQLKSVHFR), 121–154 (RMIVSDLDLDRLAKARADDLETLKLDKCSGFTTD), 155–182 (GLLSIVTHCRKIKTLLMEESSFSEKDGK), 183–210 (WLHELAQHNTSLEVLNFYMTEFAKISPK), 211–236 (DLETIARNCRSLVSVKVGDFEILELV), 237–264 (GFFKAAANLEEFCGGSLNEDIGMPEKYM), 265–283 (NLVFPRKLCRLGLSYMGPN), 284–308 (EMPILFPFAAQIRKLDLLYALLETE), 309–332 (DHCTLIQKCPNLEVLETRNVIGDR), 333–368 (GLEVLAQYCKQLKRLRIERGADEQGMEDEEGLVSQR), 369–393 (GLIALAQGCQELEYMAVYVSDITNE), 394–426 (SLESIGTYLKNLCDFRLVLLDREERITDLPLDN), 427–456 (GVRSLLIGCKKLRRFAFYLRQGGLTDLGLS), 457–478 (YIGQYSPNVRWMLLGYVGESDE), 479–500 (GLMEFSRGCPNLQKLEMRGCCF), and 501–524 (SERAIAAAVTKLPSLRYLWVQGYR). Position 85 (Arg-85) interacts with jasmonate. Residues Arg-348, Tyr-386, and Arg-409 each coordinate jasmonate. Residue Arg-496 participates in jasmonate binding.

Component of SCF(COI1) E3 ubiquitin ligase complexes at least composed of ASK1 or ASK2, CUL1, RBX1A or RBX1B and COI1. Interacts with ASK1 and ASK2, but separately. Also binds to ASK11 and ASK12. Interacts with RBCS-1B and HDA6. SCF complexes interact with the COP9 signalosome (CSN). Interacts with TIFY10A.

It functions in the pathway protein modification; protein ubiquitination. Functionally, required for jasmonate-regulated plant fertility and defense processes, and for coronatine and/or other elicitors perceptions/responses. Seems to not be required for meiosis. Required for the regulation of some genes induced by wounding, but not for all. Component of SCF(COI1) E3 ubiquitin ligase complexes, which may mediate the ubiquitination and subsequent proteasomal degradation of target proteins (probably including the ribulose bisphosphate carboxylase small chain 1B RBCS-1B and the histone deacetylase HDA6). These SCF complexes play crucial roles in regulating response to jasmonate, and their interactions with the COP9 signalosome (CSN) appear to be important for their activity. Interacts with TIFY10A and inositol pentakisphosphate to form a high-affinity jasmonates coreceptor. Involved in the regulation of plant gene expression during plant-pathogen interactions with Pseudomonas syringae and Alternaria brassicicola. This Arabidopsis thaliana (Mouse-ear cress) protein is Coronatine-insensitive protein 1 (COI1).